A 56-amino-acid polypeptide reads, in one-letter code: Protein hunchback (56 aa).

C2H2-type zinc fingers lie at residues His-1–His-5, Phe-11–His-33, and Tyr-39–Leu-56.

It belongs to the hunchback C2H2-type zinc-finger protein family.

It localises to the nucleus. Its function is as follows. Gap class segmentation protein that controls development of head structures. The polypeptide is Protein hunchback (hb) (Locusta migratoria (Migratory locust)).